Reading from the N-terminus, the 192-residue chain is Immunoglobulin superfamily member 23 (192 aa).

The interval 1 to 26 (MRAKPQSPLPRNPVPAWSPPTTTTDP) is disordered. Residues 7–18 (SPLPRNPVPAWS) are compositionally biased toward pro residues. Residues 20 to 128 (PTTTTDPMLE…QLVSEPVTIS (109 aa)) enclose the Ig-like domain. N-linked (GlcNAc...) asparagine glycosylation is present at Asn-64. The chain crosses the membrane as a helical span at residues 158–178 (LLAAGILGAGALIAGMCFIII).

As to expression, expressed in bone and small intestine. Highly expressed in osteoclasts, and low expressed in osteoblasts and peripheral blood mononuclear cells (PBMCs).

The protein localises to the cell membrane. Functionally, may be involved in osteoclast differentiation. The sequence is that of Immunoglobulin superfamily member 23 from Homo sapiens (Human).